An 841-amino-acid polypeptide reads, in one-letter code: Probable alpha-glucuronidase A (841 aa).

Positions methionine 1–alanine 20 are cleaved as a signal peptide. Asparagine 51, asparagine 76, asparagine 85, asparagine 149, asparagine 222, asparagine 279, asparagine 310, asparagine 343, asparagine 450, asparagine 465, asparagine 527, asparagine 576, asparagine 682, asparagine 723, and asparagine 732 each carry an N-linked (GlcNAc...) asparagine glycan.

The protein belongs to the glycosyl hydrolase 67 family.

Its subcellular location is the secreted. The enzyme catalyses an alpha-D-glucuronoside + H2O = D-glucuronate + an alcohol. In terms of biological role, alpha-glucuronidase involved in the hydrolysis of xylan, a major structural heterogeneous polysaccharide found in plant biomass representing the second most abundant polysaccharide in the biosphere, after cellulose. Releases 4-O-methylglucuronic acid from xylan. The sequence is that of Probable alpha-glucuronidase A (aguA) from Aspergillus niger (strain ATCC MYA-4892 / CBS 513.88 / FGSC A1513).